Here is a 211-residue protein sequence, read N- to C-terminus: Dephospho-CoA kinase (211 aa).

A DPCK domain is found at 3-206; that stretch reads VIGLTGGIAT…GGRGRRLPNA (204 aa). Residue 11 to 16 participates in ATP binding; the sequence is ATGKST.

Belongs to the CoaE family.

It is found in the cytoplasm. It catalyses the reaction 3'-dephospho-CoA + ATP = ADP + CoA + H(+). It functions in the pathway cofactor biosynthesis; coenzyme A biosynthesis; CoA from (R)-pantothenate: step 5/5. In terms of biological role, catalyzes the phosphorylation of the 3'-hydroxyl group of dephosphocoenzyme A to form coenzyme A. This is Dephospho-CoA kinase from Anaeromyxobacter dehalogenans (strain 2CP-C).